Here is a 257-residue protein sequence, read N- to C-terminus: Thiazole synthase (257 aa).

The active-site Schiff-base intermediate with DXP is the Lys-100. 1-deoxy-D-xylulose 5-phosphate is bound by residues Gly-161, Ala-187–Gly-188, and Asn-209–Thr-210.

The protein belongs to the ThiG family. Homotetramer. Forms heterodimers with either ThiH or ThiS.

It is found in the cytoplasm. The catalysed reaction is [ThiS sulfur-carrier protein]-C-terminal-Gly-aminoethanethioate + 2-iminoacetate + 1-deoxy-D-xylulose 5-phosphate = [ThiS sulfur-carrier protein]-C-terminal Gly-Gly + 2-[(2R,5Z)-2-carboxy-4-methylthiazol-5(2H)-ylidene]ethyl phosphate + 2 H2O + H(+). It participates in cofactor biosynthesis; thiamine diphosphate biosynthesis. Its function is as follows. Catalyzes the rearrangement of 1-deoxy-D-xylulose 5-phosphate (DXP) to produce the thiazole phosphate moiety of thiamine. Sulfur is provided by the thiocarboxylate moiety of the carrier protein ThiS. In vitro, sulfur can be provided by H(2)S. The sequence is that of Thiazole synthase from Zymomonas mobilis subsp. mobilis (strain ATCC 31821 / ZM4 / CP4).